A 157-amino-acid chain; its full sequence is Small ribosomal subunit protein uS7 (157 aa).

Belongs to the universal ribosomal protein uS7 family. In terms of assembly, part of the 30S ribosomal subunit. Contacts proteins S9 and S11.

One of the primary rRNA binding proteins, it binds directly to 16S rRNA where it nucleates assembly of the head domain of the 30S subunit. Is located at the subunit interface close to the decoding center, probably blocks exit of the E-site tRNA. This Caulobacter sp. (strain K31) protein is Small ribosomal subunit protein uS7.